Consider the following 202-residue polypeptide: Ribonuclease HII (202 aa).

The region spanning 1–195 (MIVAGVDEVG…PELKGGSPAG (195 aa)) is the RNase H type-2 domain. A divalent metal cation is bound by residues aspartate 7, glutamate 8, and aspartate 103.

This sequence belongs to the RNase HII family. Requires Mn(2+) as cofactor. Mg(2+) is required as a cofactor.

The protein localises to the cytoplasm. The catalysed reaction is Endonucleolytic cleavage to 5'-phosphomonoester.. Its function is as follows. Endonuclease that specifically degrades the RNA of RNA-DNA hybrids. The polypeptide is Ribonuclease HII (Synechococcus sp. (strain RCC307)).